Consider the following 213-residue polypeptide: NADH-quinone oxidoreductase subunit B (213 aa).

Residues cysteine 38, cysteine 39, cysteine 104, and cysteine 133 each contribute to the [4Fe-4S] cluster site. The tract at residues isoleucine 172–alanine 213 is disordered. Positions proline 197 to serine 206 are enriched in acidic residues.

It belongs to the complex I 20 kDa subunit family. NDH-1 is composed of 14 different subunits. Subunits NuoB, C, D, E, F, and G constitute the peripheral sector of the complex. [4Fe-4S] cluster serves as cofactor.

Its subcellular location is the cell inner membrane. It carries out the reaction a quinone + NADH + 5 H(+)(in) = a quinol + NAD(+) + 4 H(+)(out). Its function is as follows. NDH-1 shuttles electrons from NADH, via FMN and iron-sulfur (Fe-S) centers, to quinones in the respiratory chain. The immediate electron acceptor for the enzyme in this species is believed to be a menaquinone. Couples the redox reaction to proton translocation (for every two electrons transferred, four hydrogen ions are translocated across the cytoplasmic membrane), and thus conserves the redox energy in a proton gradient. This is NADH-quinone oxidoreductase subunit B (nuoB) from Salinibacter ruber (strain DSM 13855 / M31).